The primary structure comprises 27 residues: Delta-conotoxin TxVIB (27 aa).

3 disulfides stabilise this stretch: Cys-2/Cys-17, Cys-9/Cys-21, and Cys-16/Cys-26.

The protein belongs to the conotoxin O1 superfamily. In terms of tissue distribution, expressed by the venom duct.

The protein localises to the secreted. In terms of biological role, delta-conotoxins bind to site 6 of voltage-gated sodium channels (Nav) and inhibit the inactivation process. Induces membrane depolarization and spontaneous repetitive firing of neurons. In Conus textile (Cloth-of-gold cone), this protein is Delta-conotoxin TxVIB.